A 200-amino-acid chain; its full sequence is Sorting nexin-10 (200 aa).

The required for interaction with ATP6V1D stretch occupies residues 8-125 (EEFVSVWVRD…SLHLFLQSHL (118 aa)). The region spanning 10-127 (FVSVWVRDPR…HLFLQSHLNS (118 aa)) is the PX domain. The a 1,2-diacyl-sn-glycero-3-phospho-(1D-myo-inositol-3-phosphate) site is built by Arg53, Lys79, and Arg94. The span at 156 to 167 (FPEEEEGKKEND) shows a compositional bias: basic and acidic residues. The segment at 156–200 (FPEEEEGKKENDIDYDSESSSSGFGHSSDDSSSHGCKMSTAPQES) is disordered.

The protein belongs to the sorting nexin family. As to quaternary structure, interacts with ATP6V1D; may play a role in ciliogenesis.

Its subcellular location is the cytoplasm. It is found in the endosome membrane. The protein localises to the cytoskeleton. It localises to the microtubule organizing center. The protein resides in the centrosome. Probable phosphoinositide-binding protein involved in protein sorting and membrane trafficking in endosomes. Plays a role in cilium biogenesis through regulation of the transport and the localization of proteins to the cilium. Required for the localization to the cilium of V-ATPase subunit ATP6V1D and ATP6V0D1, and RAB8A. Involved in osteoclast differentiation and therefore bone resorption. The protein is Sorting nexin-10 (SNX10) of Bos taurus (Bovine).